The following is a 401-amino-acid chain: NAD(P)H-quinone oxidoreductase subunit H, chloroplastic (401 aa).

Belongs to the complex I 49 kDa subunit family. NDH is composed of at least 16 different subunits, 5 of which are encoded in the nucleus.

The protein resides in the plastid. The protein localises to the chloroplast thylakoid membrane. The enzyme catalyses a plastoquinone + NADH + (n+1) H(+)(in) = a plastoquinol + NAD(+) + n H(+)(out). The catalysed reaction is a plastoquinone + NADPH + (n+1) H(+)(in) = a plastoquinol + NADP(+) + n H(+)(out). NDH shuttles electrons from NAD(P)H:plastoquinone, via FMN and iron-sulfur (Fe-S) centers, to quinones in the photosynthetic chain and possibly in a chloroplast respiratory chain. The immediate electron acceptor for the enzyme in this species is believed to be plastoquinone. Couples the redox reaction to proton translocation, and thus conserves the redox energy in a proton gradient. The chain is NAD(P)H-quinone oxidoreductase subunit H, chloroplastic from Aethionema cordifolium (Lebanon stonecress).